A 381-amino-acid chain; its full sequence is MSRLQFQLQATDGHARRGRLTFPRGTVETPAFMPVGTYGSVKGILPEQIRALGAEIILGNTFHLYLRPGLEVIGDHGGLHGFARWDGPILTDSGGFQVFSLAHRRKITEQGVTFSSPTDGARVFLGPEESMKIQKVLDSDIVMIFDECTPYPATEDVARRSMELSLRWAQRSRDAHDGLGNDAALFGIVQGGVHPDLRSRSLDGLQGIGFDGYAIGGLAVGEPEHERNAMLEHLHPRLPAERPRYLMGVGRPEDLVEGVARGVDMFDCVMPTRNARNGHYFTSFGTVRIRNAKYERDLDTIEPGCGCHACSSGYTRAYLRHLDRCNEMLAPMLGTLHNLCYYEKLMADMRAAIASGTFVEFRRSFYAARGATTPPLPGETS.

Asp-92 serves as the catalytic Proton acceptor. Residues 92-96, Asp-146, Gln-190, and Gly-217 contribute to the substrate site; that span reads DSGGF. The interval 248–254 is RNA binding; it reads GVGRPED. The active-site Nucleophile is Asp-267. The segment at 272-276 is RNA binding; important for wobble base 34 recognition; that stretch reads TRNAR. 4 residues coordinate Zn(2+): Cys-305, Cys-307, Cys-310, and His-337.

The protein belongs to the queuine tRNA-ribosyltransferase family. Homodimer. Within each dimer, one monomer is responsible for RNA recognition and catalysis, while the other monomer binds to the replacement base PreQ1. The cofactor is Zn(2+).

It catalyses the reaction 7-aminomethyl-7-carbaguanine + guanosine(34) in tRNA = 7-aminomethyl-7-carbaguanosine(34) in tRNA + guanine. Its pathway is tRNA modification; tRNA-queuosine biosynthesis. Catalyzes the base-exchange of a guanine (G) residue with the queuine precursor 7-aminomethyl-7-deazaguanine (PreQ1) at position 34 (anticodon wobble position) in tRNAs with GU(N) anticodons (tRNA-Asp, -Asn, -His and -Tyr). Catalysis occurs through a double-displacement mechanism. The nucleophile active site attacks the C1' of nucleotide 34 to detach the guanine base from the RNA, forming a covalent enzyme-RNA intermediate. The proton acceptor active site deprotonates the incoming PreQ1, allowing a nucleophilic attack on the C1' of the ribose to form the product. After dissociation, two additional enzymatic reactions on the tRNA convert PreQ1 to queuine (Q), resulting in the hypermodified nucleoside queuosine (7-(((4,5-cis-dihydroxy-2-cyclopenten-1-yl)amino)methyl)-7-deazaguanosine). The chain is Queuine tRNA-ribosyltransferase from Xanthomonas euvesicatoria pv. vesicatoria (strain 85-10) (Xanthomonas campestris pv. vesicatoria).